The sequence spans 198 residues: MSSRDRGSPSSSSSSSSLPGIEKYNEKVKNQIQALVRVIKVARTYRDDNVPSLIEQGLYLGSVAAASNKNVLKSYNVTHILTVASSLRPAHPDDFVYKVVRVVDKEDTNLEMYFDECVDFIDEAKRQGGSVLVHCFVGKSRSVTIVVAYLMKKHGMTLAQALQHVKSKRPVASPNAGFIRQLQDLEKSMQVSDQFFSF.

Positions 1-20 (MSSRDRGSPSSSSSSSSLPG) are disordered. The segment covering 8-17 (SPSSSSSSSS) has biased composition (low complexity). A caM binding domain 1 region spans residues 26-47 (EKVKNQIQALVRVIKVARTYRD). The region spanning 50–191 (VPSLIEQGLY…LQDLEKSMQV (142 aa)) is the Tyrosine-protein phosphatase domain. Cysteine 135 acts as the Phosphocysteine intermediate in catalysis. Positions 151–180 (MKKHGMTLAQALQHVKSKRPVASPNAGFIR) are caM binding domain 2.

This sequence belongs to the protein-tyrosine phosphatase family. Non-receptor class dual specificity subfamily. Interacts with calmodulin (CaM) in a calcium Ca(2+)-dependent manner. As to expression, expressed in roots, stems, leaves and flowers.

It localises to the nucleus. Its subcellular location is the cytoplasm. The catalysed reaction is O-phospho-L-tyrosyl-[protein] + H2O = L-tyrosyl-[protein] + phosphate. The enzyme catalyses O-phospho-L-seryl-[protein] + H2O = L-seryl-[protein] + phosphate. It catalyses the reaction O-phospho-L-threonyl-[protein] + H2O = L-threonyl-[protein] + phosphate. With respect to regulation, inhibited by sodium vanadate and sodium tungstate. NaF and spermifine repress specifically phosphoserine and phosphothreonine phosphatase activity. In terms of biological role, has a dual specificity toward Ser/Thr and Tyr-containing proteins. Dephosphorylates MPK4 in vitro. This chain is Dual specificity protein phosphatase 1 (DSPTP1), found in Arabidopsis thaliana (Mouse-ear cress).